The following is a 247-amino-acid chain: Tyrosine recombinase XerD-like (247 aa).

In terms of domain architecture, Core-binding (CB) spans 1 to 72 (MIKHIEAFLA…TVNQFLHYLY (72 aa)). A Tyr recombinase domain is found at 91-247 (STKVPFTYQL…PITLEKYYRL (157 aa)). R212 is an active-site residue. Y244 (O-(3'-phospho-DNA)-tyrosine intermediate) is an active-site residue.

This sequence belongs to the 'phage' integrase family. XerD-like subfamily.

The protein localises to the cytoplasm. In terms of biological role, putative tyrosine recombinase. Not involved in the cutting and rejoining of the recombining DNA molecules on dif(SL) site. The sequence is that of Tyrosine recombinase XerD-like from Streptococcus uberis (strain ATCC BAA-854 / 0140J).